A 390-amino-acid chain; its full sequence is T-cell surface glycoprotein CD1e, membrane-associated (390 aa).

The signal sequence occupies residues 1-14 (MLLLILLFFKGLVC). The propeptide at 15-33 (HEKSIVGPQPLGWHHPAEA) is removed in sCD1e. 2 N-linked (GlcNAc...) asparagine glycosylation sites follow: asparagine 49 and asparagine 70. 2 cysteine pairs are disulfide-bonded: cysteine 131–cysteine 194 and cysteine 234–cysteine 288. The region spanning 215 to 306 (PEVWLSRGPS…GHDIIIHWGG (92 aa)) is the Ig-like domain. A helical membrane pass occupies residues 305–325 (GGYSILLILMYVAVIVTLVTL).

As to quaternary structure, heterodimer with B2M (beta-2-microglobulin). The association with B2M appears to be facilitated by the presence of the propeptide. Mono-ubiquitinated. Post-translationally, proteolytically cleaved in endosomes to yield a soluble form.

The protein resides in the golgi apparatus membrane. It is found in the early endosome. Its subcellular location is the late endosome. It localises to the lysosome lumen. T-cell surface glycoprotein CD1e, soluble is required for the presentation of glycolipid antigens on the cell surface. The membrane-associated form is not active. This is T-cell surface glycoprotein CD1e, membrane-associated (CD1E) from Cavia porcellus (Guinea pig).